The following is a 492-amino-acid chain: ATP synthase subunit beta, chloroplastic (492 aa).

An ATP-binding site is contributed by 170 to 177 (GGAGVGKT).

It belongs to the ATPase alpha/beta chains family. As to quaternary structure, F-type ATPases have 2 components, CF(1) - the catalytic core - and CF(0) - the membrane proton channel. CF(1) has five subunits: alpha(3), beta(3), gamma(1), delta(1), epsilon(1). CF(0) has four main subunits: a(1), b(1), b'(1) and c(9-12).

The protein resides in the plastid. The protein localises to the chloroplast thylakoid membrane. It catalyses the reaction ATP + H2O + 4 H(+)(in) = ADP + phosphate + 5 H(+)(out). Produces ATP from ADP in the presence of a proton gradient across the membrane. The catalytic sites are hosted primarily by the beta subunits. The sequence is that of ATP synthase subunit beta, chloroplastic from Huperzia lucidula (Shining clubmoss).